Consider the following 37-residue polypeptide: Potassium channel toxin alpha-KTx 2.14 (37 aa).

Disulfide bonds link C7-C28, C13-C33, and C17-C35.

It belongs to the short scorpion toxin superfamily. Potassium channel inhibitor family. Alpha-KTx 02 subfamily. In terms of tissue distribution, expressed by the venom gland.

It is found in the secreted. In terms of biological role, reversibly blocks hKv1.1/KCNA1 (50% inhibition of current at 1 uM). Seems not to be voltage-dependent. The protein is Potassium channel toxin alpha-KTx 2.14 of Heteroctenus garridoi (Cuban scorpion).